A 256-amino-acid polypeptide reads, in one-letter code: Ribonuclease 3 (256 aa).

Residues 6-128 (LATLETRLDH…LFGAVFLDAG (123 aa)) form the RNase III domain. Glutamate 41 is a Mg(2+) binding site. Aspartate 45 is an active-site residue. Residues aspartate 114 and glutamate 117 each coordinate Mg(2+). The active site involves glutamate 117. A DRBM domain is found at 155–225 (DAKTLLQEFL…AKVALEAAQA (71 aa)).

The protein belongs to the ribonuclease III family. As to quaternary structure, homodimer. Mg(2+) serves as cofactor.

Its subcellular location is the cytoplasm. It catalyses the reaction Endonucleolytic cleavage to 5'-phosphomonoester.. In terms of biological role, digests double-stranded RNA. Involved in the processing of primary rRNA transcript to yield the immediate precursors to the large and small rRNAs (23S and 16S). Processes some mRNAs, and tRNAs when they are encoded in the rRNA operon. Processes pre-crRNA and tracrRNA of type II CRISPR loci if present in the organism. The polypeptide is Ribonuclease 3 (Bordetella bronchiseptica (strain ATCC BAA-588 / NCTC 13252 / RB50) (Alcaligenes bronchisepticus)).